The chain runs to 288 residues: Hydroxyethylthiazole kinase (288 aa).

Met-55 is a binding site for substrate. Asn-131 and Ser-177 together coordinate ATP. Gly-204 is a substrate binding site.

It belongs to the Thz kinase family. The cofactor is Mg(2+).

The enzyme catalyses 5-(2-hydroxyethyl)-4-methylthiazole + ATP = 4-methyl-5-(2-phosphooxyethyl)-thiazole + ADP + H(+). It participates in cofactor biosynthesis; thiamine diphosphate biosynthesis; 4-methyl-5-(2-phosphoethyl)-thiazole from 5-(2-hydroxyethyl)-4-methylthiazole: step 1/1. Catalyzes the phosphorylation of the hydroxyl group of 4-methyl-5-beta-hydroxyethylthiazole (THZ). This chain is Hydroxyethylthiazole kinase, found in Haloquadratum walsbyi (strain DSM 16790 / HBSQ001).